A 260-amino-acid chain; its full sequence is 3-methyl-2-oxobutanoate hydroxymethyltransferase (260 aa).

Asp-42 and Asp-81 together coordinate Mg(2+). 3-methyl-2-oxobutanoate-binding positions include 42–43, Asp-81, and Lys-109; that span reads DS. Glu-111 contributes to the Mg(2+) binding site. The active-site Proton acceptor is the Glu-178.

It belongs to the PanB family. In terms of assembly, homodecamer; pentamer of dimers. It depends on Mg(2+) as a cofactor.

It localises to the cytoplasm. The enzyme catalyses 3-methyl-2-oxobutanoate + (6R)-5,10-methylene-5,6,7,8-tetrahydrofolate + H2O = 2-dehydropantoate + (6S)-5,6,7,8-tetrahydrofolate. The protein operates within cofactor biosynthesis; (R)-pantothenate biosynthesis; (R)-pantoate from 3-methyl-2-oxobutanoate: step 1/2. Catalyzes the reversible reaction in which hydroxymethyl group from 5,10-methylenetetrahydrofolate is transferred onto alpha-ketoisovalerate to form ketopantoate. This chain is 3-methyl-2-oxobutanoate hydroxymethyltransferase, found in Vesicomyosocius okutanii subsp. Calyptogena okutanii (strain HA).